The chain runs to 311 residues: tRNA-cytidine(32) 2-sulfurtransferase (311 aa).

Positions 47-52 (SGGKDS) match the PP-loop motif motif. Residues Cys-122, Cys-125, and Cys-213 each contribute to the [4Fe-4S] cluster site.

This sequence belongs to the TtcA family. In terms of assembly, homodimer. Requires Mg(2+) as cofactor. [4Fe-4S] cluster serves as cofactor.

It is found in the cytoplasm. The catalysed reaction is cytidine(32) in tRNA + S-sulfanyl-L-cysteinyl-[cysteine desulfurase] + AH2 + ATP = 2-thiocytidine(32) in tRNA + L-cysteinyl-[cysteine desulfurase] + A + AMP + diphosphate + H(+). Its pathway is tRNA modification. Functionally, catalyzes the ATP-dependent 2-thiolation of cytidine in position 32 of tRNA, to form 2-thiocytidine (s(2)C32). The sulfur atoms are provided by the cysteine/cysteine desulfurase (IscS) system. This Escherichia coli (strain SMS-3-5 / SECEC) protein is tRNA-cytidine(32) 2-sulfurtransferase.